The following is a 346-amino-acid chain: UDP-N-acetylenolpyruvoylglucosamine reductase (346 aa).

The FAD-binding PCMH-type domain maps to 22–194; it reads GFDVRARFAC…TSVTFRLPKV (173 aa). The active site involves arginine 170. Residue serine 246 is the Proton donor of the active site. Glutamate 342 is a catalytic residue.

The protein belongs to the MurB family. FAD is required as a cofactor.

It is found in the cytoplasm. The catalysed reaction is UDP-N-acetyl-alpha-D-muramate + NADP(+) = UDP-N-acetyl-3-O-(1-carboxyvinyl)-alpha-D-glucosamine + NADPH + H(+). It functions in the pathway cell wall biogenesis; peptidoglycan biosynthesis. Functionally, cell wall formation. In Paraburkholderia xenovorans (strain LB400), this protein is UDP-N-acetylenolpyruvoylglucosamine reductase.